The primary structure comprises 178 residues: MPKPEKVQKVEELYQKMLNANALIFTEFKGLSVADLTQLRGKIRPLNAEYRVVKNTLALLAIRKIYPDKDLEKFFVGPTAITYCYGDPFGVLKALVDYAKEHELLKFKGGIIEGEVYSADEVKELAKLPPKEVLLSQVVGAISAPLSSLVWSLKWPVNKLVWTLDAIAKEKEKISINQ.

The protein belongs to the universal ribosomal protein uL10 family. As to quaternary structure, part of the ribosomal stalk of the 50S ribosomal subunit. The N-terminus interacts with L11 and the large rRNA to form the base of the stalk. The C-terminus forms an elongated spine to which L12 dimers bind in a sequential fashion forming a multimeric L10(L12)X complex.

Its function is as follows. Forms part of the ribosomal stalk, playing a central role in the interaction of the ribosome with GTP-bound translation factors. This Dictyoglomus thermophilum (strain ATCC 35947 / DSM 3960 / H-6-12) protein is Large ribosomal subunit protein uL10.